Reading from the N-terminus, the 910-residue chain is Protein translocase subunit SecA 1 (910 aa).

ATP contacts are provided by residues Gln-86, 104 to 108 (GEGKT), and Asp-512. Residues Cys-894, Cys-896, Cys-905, and His-906 each coordinate Zn(2+).

This sequence belongs to the SecA family. Monomer and homodimer. Part of the essential Sec protein translocation apparatus which comprises SecA, SecYEG and auxiliary proteins SecDF-YajC and YidC. It depends on Zn(2+) as a cofactor.

Its subcellular location is the cell inner membrane. It is found in the cytoplasm. The catalysed reaction is ATP + H2O + cellular proteinSide 1 = ADP + phosphate + cellular proteinSide 2.. Its function is as follows. Part of the Sec protein translocase complex. Interacts with the SecYEG preprotein conducting channel. Has a central role in coupling the hydrolysis of ATP to the transfer of proteins into and across the cell membrane, serving both as a receptor for the preprotein-SecB complex and as an ATP-driven molecular motor driving the stepwise translocation of polypeptide chains across the membrane. The chain is Protein translocase subunit SecA 1 from Bordetella avium (strain 197N).